The following is a 963-amino-acid chain: Spliceosome associated factor 3, U4/U6 recycling protein (963 aa).

Positions 1–11 (MATAAETSASE) are enriched in low complexity. Disordered regions lie at residues 1–36 (MATA…RTRR) and 50–90 (TMGP…YDEE). Ala2 carries the N-acetylalanine modification. The mediates interaction with PRPF3 stretch occupies residues 2 to 351 (ATAAETSASE…LVPDLWIRYS (350 aa)). 2 positions are modified to phosphoserine: Ser10 and Ser16. The span at 14 to 23 (AESKAGPKAD) shows a compositional bias: basic and acidic residues. The stretch at 21 to 46 (KADGEEDEVKAARTRRKVLSRAVAAA) forms a coiled coil. Positions 57-69 (QQEEGVSESDGDE) are enriched in acidic residues. Positions 82-110 (EYEWEYDEEEEKNQLEIERLEEQLSINVY) form a coiled coil. HAT repeat units lie at residues 126 to 158 (GELT…DEIS), 164 to 195 (LDRE…YSVG), 201 to 237 (GGLE…FESA), 242 to 275 (ARLE…WSED), 324 to 356 (GDPA…YLDR), 359 to 391 (KVKD…AMER), 394 to 430 (VDHQ…YLRR), and 487 to 520 (NNMQ…LERA). Ser215 bears the Phosphoserine mark. A required for interaction with USP4 region spans residues 487–520 (NNMQKARELWDSIMTRGNAKYANMWLEYYNLERA). The tract at residues 537-953 (CTSDYPEHVC…AATEAPKMSN (417 aa)) is necessary and sufficient for U6 snRNA binding. A coiled-coil region spans residues 559–619 (LEDWDIAVQK…ALKKKKKIRG (61 aa)). The span at 590–601 (LVQQEEEKAEQR) shows a compositional bias: basic and acidic residues. A disordered region spans residues 590-694 (LVQQEEEKAE…AASLKRDMPK (105 aa)). Positions 600–670 (QRKRARAEKK…EVAAGPAGKC (71 aa)) are required for nuclear localization. Positions 601-608 (RKRARAEK) match the Nuclear localization signal motif. The segment covering 602-617 (KRARAEKKALKKKKKI) has biased composition (basic residues). Residues 626–639 (DEDDEKEWGDDEEE) are compositionally biased toward acidic residues. The residue at position 650 (Ser650) is a Phosphoserine. Residue Thr657 is modified to Phosphothreonine. A compositionally biased stretch (basic and acidic residues) spans 677 to 694 (PPSKQKEKAASLKRDMPK). Residues 704–782 (ITVFVSNLPY…RPMFVSPCVD (79 aa)) form the RRM 1 domain. Phosphoserine is present on residues Ser769, Ser795, and Ser852. Positions 801–878 (HKLFISGLPF…NIIKVAISNP (78 aa)) constitute an RRM 2 domain. The disordered stretch occupies residues 878–898 (PPQRKVPEKPETRKAPGGPML). Over residues 882 to 891 (KVPEKPETRK) the composition is skewed to basic and acidic residues. Omega-N-methylarginine is present on Arg906. The tract at residues 920–948 (LQRPSAAAPQAENGPAAAPAVAAPAATEA) is disordered. Residues 925–948 (AAAPQAENGPAAAPAVAAPAATEA) are compositionally biased toward low complexity.

In terms of assembly, component of the 7SK snRNP complex at least composed of P-TEFb (composed of CDK9 and CCNT1/cyclin-T1), HEXIM1, HEXIM2, BCDIN3, SART3 proteins and 7SK and U6 snRNAs. Interacts with AGO1 and AGO2. Interacts with PRPF3 and USP4; the interaction with PRPF3 is direct and recruits USP4 to its substrate PRPF3. Interacts with USP15; the interaction is direct. Interacts with HIV-1 Tat. Ubiquitously expressed.

It localises to the nucleus. Its subcellular location is the nucleoplasm. It is found in the cajal body. The protein localises to the nucleus speckle. The protein resides in the cytoplasm. Its function is as follows. U6 snRNP-binding protein that functions as a recycling factor of the splicing machinery. Promotes the initial reassembly of U4 and U6 snRNPs following their ejection from the spliceosome during its maturation. Also binds U6atac snRNPs and may function as a recycling factor for U4atac/U6atac spliceosomal snRNP, an initial step in the assembly of U12-type spliceosomal complex. The U12-type spliceosomal complex plays a role in the splicing of introns with non-canonical splice sites. May also function as a substrate-targeting factor for deubiquitinases like USP4 and USP15. Recruits USP4 to ubiquitinated PRPF3 within the U4/U5/U6 tri-snRNP complex, promoting PRPF3 deubiquitination and thereby regulating the spliceosome U4/U5/U6 tri-snRNP spliceosomal complex disassembly. May also recruit the deubiquitinase USP15 to histone H2B and mediate histone deubiquitination, thereby regulating gene expression and/or DNA repair. May play a role in hematopoiesis probably through transcription regulation of specific genes including MYC. Functionally, regulates Tat transactivation activity through direct interaction. May be a cellular factor for HIV-1 gene expression and viral replication. The protein is Spliceosome associated factor 3, U4/U6 recycling protein of Homo sapiens (Human).